The sequence spans 435 residues: Glutamyl-tRNA reductase (435 aa).

Substrate contacts are provided by residues 49-52 (TCNR), Ser-118, 123-125 (EPQ), and Gln-129. The Nucleophile role is filled by Cys-50. Residue 203 to 208 (GAGETI) coordinates NADP(+).

It belongs to the glutamyl-tRNA reductase family. Homodimer.

The catalysed reaction is (S)-4-amino-5-oxopentanoate + tRNA(Glu) + NADP(+) = L-glutamyl-tRNA(Glu) + NADPH + H(+). It functions in the pathway porphyrin-containing compound metabolism; protoporphyrin-IX biosynthesis; 5-aminolevulinate from L-glutamyl-tRNA(Glu): step 1/2. In terms of biological role, catalyzes the NADPH-dependent reduction of glutamyl-tRNA(Glu) to glutamate 1-semialdehyde (GSA). This chain is Glutamyl-tRNA reductase, found in Glaesserella parasuis serovar 5 (strain SH0165) (Haemophilus parasuis).